Here is a 158-residue protein sequence, read N- to C-terminus: Endoribonuclease YbeY (158 aa).

Residues H121, H125, and H131 each contribute to the Zn(2+) site.

The protein belongs to the endoribonuclease YbeY family. Requires Zn(2+) as cofactor.

It is found in the cytoplasm. Functionally, single strand-specific metallo-endoribonuclease involved in late-stage 70S ribosome quality control and in maturation of the 3' terminus of the 16S rRNA. This chain is Endoribonuclease YbeY, found in Exiguobacterium sp. (strain ATCC BAA-1283 / AT1b).